Consider the following 467-residue polypeptide: Siroheme synthase (467 aa).

The interval M1–M203 is precorrin-2 dehydrogenase /sirohydrochlorin ferrochelatase. Residues E22–I23 and P43–E44 contribute to the NAD(+) site. The residue at position 128 (S128) is a Phosphoserine. The uroporphyrinogen-III C-methyltransferase stretch occupies residues G216–G467. P225 contributes to the S-adenosyl-L-methionine binding site. D248 functions as the Proton acceptor in the catalytic mechanism. K270 functions as the Proton donor in the catalytic mechanism. S-adenosyl-L-methionine contacts are provided by residues G301–D303, I306, T331–A332, M383, and G412.

This sequence in the N-terminal section; belongs to the precorrin-2 dehydrogenase / sirohydrochlorin ferrochelatase family. The protein in the C-terminal section; belongs to the precorrin methyltransferase family.

It carries out the reaction uroporphyrinogen III + 2 S-adenosyl-L-methionine = precorrin-2 + 2 S-adenosyl-L-homocysteine + H(+). The enzyme catalyses precorrin-2 + NAD(+) = sirohydrochlorin + NADH + 2 H(+). It catalyses the reaction siroheme + 2 H(+) = sirohydrochlorin + Fe(2+). Its pathway is cofactor biosynthesis; adenosylcobalamin biosynthesis; precorrin-2 from uroporphyrinogen III: step 1/1. The protein operates within cofactor biosynthesis; adenosylcobalamin biosynthesis; sirohydrochlorin from precorrin-2: step 1/1. It functions in the pathway porphyrin-containing compound metabolism; siroheme biosynthesis; precorrin-2 from uroporphyrinogen III: step 1/1. It participates in porphyrin-containing compound metabolism; siroheme biosynthesis; siroheme from sirohydrochlorin: step 1/1. Its pathway is porphyrin-containing compound metabolism; siroheme biosynthesis; sirohydrochlorin from precorrin-2: step 1/1. Functionally, multifunctional enzyme that catalyzes the SAM-dependent methylations of uroporphyrinogen III at position C-2 and C-7 to form precorrin-2 via precorrin-1. Then it catalyzes the NAD-dependent ring dehydrogenation of precorrin-2 to yield sirohydrochlorin. Finally, it catalyzes the ferrochelation of sirohydrochlorin to yield siroheme. The polypeptide is Siroheme synthase (Methylobacillus flagellatus (strain ATCC 51484 / DSM 6875 / VKM B-1610 / KT)).